The following is a 143-amino-acid chain: Transcriptional regulator MraZ (143 aa).

SpoVT-AbrB domains lie at 5–47 (THSP…PIRE) and 76–119 (ASNE…DAQT).

The protein belongs to the MraZ family. As to quaternary structure, forms oligomers.

The protein resides in the cytoplasm. It is found in the nucleoid. This Thermobifida fusca (strain YX) protein is Transcriptional regulator MraZ.